The sequence spans 3326 residues: Protein unc-80 homolog (3326 aa).

A compositionally biased stretch (polar residues) spans 152 to 164 (IENQGSPGQPCRS). Disordered stretches follow at residues 152–178 (IENQ…RKTF), 243–267 (KRSS…QQGE), 283–317 (PKAT…RASL), and 450–469 (RKED…GKRR). S257 bears the Phosphoserine mark. Over residues 283–308 (PKATISGCHQGNSFDGSLSSQTSQER) the composition is skewed to polar residues. Residue S526 is modified to Phosphoserine. Disordered stretches follow at residues 536–560 (LSAR…SHGE), 697–785 (RKKS…DNIP), 967–1076 (GKKV…SRRI), 1405–1430 (EDSK…KKVP), and 1469–1516 (SSKL…LSNA). 2 stretches are compositionally biased toward basic and acidic residues: residues 551–560 (LPDHSNSHGE) and 699–713 (KSEN…KRPS). The span at 723 to 737 (SSSSTSGFGAPSASG) shows a compositional bias: low complexity. Positions 738–770 (AGDGGGEEGGGGDGGGGGGGGDGGGGGGGGGGP) are enriched in gly residues. Over residues 772 to 783 (EKNEKNQEKDDN) the composition is skewed to basic and acidic residues. Residues 1038-1055 (SQSAASDTSSQSEQDTSE) show a composition bias toward low complexity. The segment covering 1418–1429 (IKSDAGAEEKKV) has biased composition (basic and acidic residues). Helical transmembrane passes span 2336-2356 (PFVL…DAAN) and 2466-2486 (IAAT…VEVL). The interval 2493–2515 (PQMSRSDQGHKGTTTANHTMSSG) is disordered. A run of 2 helical transmembrane segments spans residues 2853-2873 (GLAE…LVCF) and 2899-2919 (LALW…FVLL). Positions 3010-3032 (NTGTGTVWEQDSEPSQQASQDTL) are enriched in polar residues. Positions 3010–3052 (NTGTGTVWEQDSEPSQQASQDTLSRTDEEDEENDSVSMPSVVS) are disordered. Residue S3110 is modified to Phosphoserine. Disordered regions lie at residues 3122 to 3222 (LQQP…VLTS), 3236 to 3271 (PKQS…LSDP), and 3296 to 3326 (NGTE…ESHV). Residues 3127–3136 (GRKRGLRQLR) are compositionally biased toward basic residues. A compositionally biased stretch (polar residues) spans 3157–3168 (LSTTRRSIQPKT). Over residues 3298-3309 (TENPLLSSQFTF) the composition is skewed to polar residues. Positions 3315–3326 (GDTDSALDESHV) are enriched in acidic residues.

Belongs to the unc-80 family. As to quaternary structure, NALCN complex consists of NALCN and auxiliary subunits, UNC79, UNC80 and NACL1. These auxiliary subunits are essential for the NALCN complex function. Interacts (via N-terminus half) with NALCN; this interaction facilitates NALCN surface localization. Interacts (via C-terminus) with UNC79. UNC80 bridges NALCN to UNC79. Post-translationally, phosphorylated on tyrosine residues. Expressed almost exclusively in the brain. Expressed in hippocampus and ventral tegmental area neurons.

It is found in the cell membrane. The protein localises to the cell projection. Its subcellular location is the dendrite. Auxiliary subunit of the NALCN sodium channel complex. The NALCN sodium channel complex is a voltage-gated ion channel responsible for the resting Na(+) permeability that controls neuronal excitability. This complex is activated by neuropeptides substance P, neurotensin. In addition, the channel is inhibited by extracellular Ca(2+) through the Ca(2+)-sensing receptor. UNC80 is essential for NALCN sensitivity to extracellular calcium. In Mus musculus (Mouse), this protein is Protein unc-80 homolog (Unc80).